Consider the following 172-residue polypeptide: MORN repeat-containing protein 5 (172 aa).

MORN repeat units follow at residues 8–30, 31–53, and 54–75; these read YIGE…TETK, YIGE…NGSR, and FDAV…DGLQ.

Its subcellular location is the cell projection. The protein localises to the cilium. It is found in the flagellum. This is MORN repeat-containing protein 5 (MORN5) from Bos taurus (Bovine).